The following is a 20-amino-acid chain: uncharacterized protein (20 aa).

This is an uncharacterized protein from Serratia marcescens.